The following is a 438-amino-acid chain: Serine hydroxymethyltransferase (438 aa).

Residues L119 and 123 to 125 (GHL) contribute to the (6S)-5,6,7,8-tetrahydrofolate site. Residue K228 is modified to N6-(pyridoxal phosphate)lysine. A (6S)-5,6,7,8-tetrahydrofolate-binding site is contributed by 370-372 (SPF).

Belongs to the SHMT family. In terms of assembly, homodimer. Requires pyridoxal 5'-phosphate as cofactor.

Its subcellular location is the cytoplasm. The enzyme catalyses (6R)-5,10-methylene-5,6,7,8-tetrahydrofolate + glycine + H2O = (6S)-5,6,7,8-tetrahydrofolate + L-serine. The protein operates within one-carbon metabolism; tetrahydrofolate interconversion. It functions in the pathway amino-acid biosynthesis; glycine biosynthesis; glycine from L-serine: step 1/1. Catalyzes the reversible interconversion of serine and glycine with tetrahydrofolate (THF) serving as the one-carbon carrier. This reaction serves as the major source of one-carbon groups required for the biosynthesis of purines, thymidylate, methionine, and other important biomolecules. Also exhibits THF-independent aldolase activity toward beta-hydroxyamino acids, producing glycine and aldehydes, via a retro-aldol mechanism. This is Serine hydroxymethyltransferase from Chlorobium chlorochromatii (strain CaD3).